A 404-amino-acid chain; its full sequence is Imidazolonepropionase (404 aa).

The Fe(3+) site is built by His73 and His75. Positions 73 and 75 each coordinate Zn(2+). Residues Arg82, Tyr145, and His178 each coordinate 4-imidazolone-5-propanoate. Tyr145 provides a ligand contact to N-formimidoyl-L-glutamate. His243 contributes to the Fe(3+) binding site. His243 serves as a coordination point for Zn(2+). Gln246 provides a ligand contact to 4-imidazolone-5-propanoate. Asp318 provides a ligand contact to Fe(3+). Asp318 serves as a coordination point for Zn(2+). Residues Asn320 and Gly322 each contribute to the N-formimidoyl-L-glutamate site. 4-imidazolone-5-propanoate is bound at residue Ser323.

This sequence belongs to the metallo-dependent hydrolases superfamily. HutI family. Requires Zn(2+) as cofactor. It depends on Fe(3+) as a cofactor.

It is found in the cytoplasm. The enzyme catalyses 4-imidazolone-5-propanoate + H2O = N-formimidoyl-L-glutamate. The protein operates within amino-acid degradation; L-histidine degradation into L-glutamate; N-formimidoyl-L-glutamate from L-histidine: step 3/3. Functionally, catalyzes the hydrolytic cleavage of the carbon-nitrogen bond in imidazolone-5-propanoate to yield N-formimidoyl-L-glutamate. It is the third step in the universal histidine degradation pathway. The polypeptide is Imidazolonepropionase (Bradyrhizobium diazoefficiens (strain JCM 10833 / BCRC 13528 / IAM 13628 / NBRC 14792 / USDA 110)).